We begin with the raw amino-acid sequence, 183 residues long: Potassium-transporting ATPase KdpC subunit (183 aa).

A helical membrane pass occupies residues 10 to 30 (ASLLVLSLVTGVAYPLLVTGI).

It belongs to the KdpC family. In terms of assembly, the system is composed of three essential subunits: KdpA, KdpB and KdpC.

It localises to the cell inner membrane. Functionally, part of the high-affinity ATP-driven potassium transport (or Kdp) system, which catalyzes the hydrolysis of ATP coupled with the electrogenic transport of potassium into the cytoplasm. This subunit acts as a catalytic chaperone that increases the ATP-binding affinity of the ATP-hydrolyzing subunit KdpB by the formation of a transient KdpB/KdpC/ATP ternary complex. This Pseudomonas aeruginosa (strain UCBPP-PA14) protein is Potassium-transporting ATPase KdpC subunit.